A 302-amino-acid chain; its full sequence is Sulfate adenylyltransferase subunit 2 (302 aa).

Positions 280-302 (RQGRVIDHDSSGSMEKKKREGYF) are disordered.

It belongs to the PAPS reductase family. CysD subfamily. Heterodimer composed of CysD, the smaller subunit, and CysN.

It carries out the reaction sulfate + ATP + H(+) = adenosine 5'-phosphosulfate + diphosphate. It functions in the pathway sulfur metabolism; hydrogen sulfide biosynthesis; sulfite from sulfate: step 1/3. In terms of biological role, with CysN forms the ATP sulfurylase (ATPS) that catalyzes the adenylation of sulfate producing adenosine 5'-phosphosulfate (APS) and diphosphate, the first enzymatic step in sulfur assimilation pathway. APS synthesis involves the formation of a high-energy phosphoric-sulfuric acid anhydride bond driven by GTP hydrolysis by CysN coupled to ATP hydrolysis by CysD. The protein is Sulfate adenylyltransferase subunit 2 of Shewanella amazonensis (strain ATCC BAA-1098 / SB2B).